A 290-amino-acid chain; its full sequence is Taxis protein CheF1 (290 aa).

As to quaternary structure, interacts with chemotaxis (Che) proteins as well as flagella accessory (Fla) proteins.

Its function is as follows. Involved in taxis signal transduction. Essential for the ability to control the direction of flagellar rotation. May have a role between CheY and the flagellum. The protein is Taxis protein CheF1 (cheF1) of Halobacterium salinarum (strain ATCC 29341 / DSM 671 / R1).